Consider the following 394-residue polypeptide: Teichoic acid poly(glycerol phosphate) polymerase (394 aa).

It belongs to the CDP-glycerol glycerophosphotransferase family.

The protein resides in the cell membrane. It catalyses the reaction 4-O-[(2R)-glycerylphospho]-N-acetyl-beta-D-mannosaminyl-(1-&gt;4)-N-acetyl-alpha-D-glucosaminyl di-trans,octa-cis-undecaprenyl diphosphate + n CDP-glycerol = 4-O-{[(2R)-1-glycerylphospho](n)-(2R)-1-glycerylphospho}-N-acetyl-beta-D-mannosaminyl-(1-&gt;4)-N-acetyl-alpha-D-glucosaminyl undecaprenyl diphosphate + n CMP + n H(+). In terms of biological role, catalyzes the addition of further 2-8 glycerol phosphate units from CDP-glycerol to the single glycerol phosphate unit bound to the prenolpyrophosphate-linked disaccharide. The function in the cell is unknown since the product is not part of the poly(ribitol phosphate) teichoic acid found in the cell walls. The polypeptide is Teichoic acid poly(glycerol phosphate) polymerase (tarF) (Bacillus spizizenii (strain ATCC 23059 / NRRL B-14472 / W23) (Bacillus subtilis subsp. spizizenii)).